The following is a 298-amino-acid chain: GTPase Era (298 aa).

Residues 8 to 176 (RCGRIAVIGR…VSDLLALLPE (169 aa)) form the Era-type G domain. Residues 16-23 (GRPNVGKS) form a G1 region. 16 to 23 (GRPNVGKS) contributes to the GTP binding site. Residues 42 to 46 (QTTRH) are G2. The tract at residues 63 to 66 (DTPG) is G3. Residues 63 to 67 (DTPGL) and 125 to 128 (NKID) contribute to the GTP site. The tract at residues 125–128 (NKID) is G4. A G5 region spans residues 155–157 (VSA). The 85-residue stretch at 199–283 (VREQVMRQLG…FLETWVRVRK (85 aa)) folds into the KH type-2 domain.

Belongs to the TRAFAC class TrmE-Era-EngA-EngB-Septin-like GTPase superfamily. Era GTPase family. In terms of assembly, monomer.

It is found in the cytoplasm. Its subcellular location is the cell inner membrane. In terms of biological role, an essential GTPase that binds both GDP and GTP, with rapid nucleotide exchange. Plays a role in 16S rRNA processing and 30S ribosomal subunit biogenesis and possibly also in cell cycle regulation and energy metabolism. The sequence is that of GTPase Era from Xylella fastidiosa (strain Temecula1 / ATCC 700964).